Here is a 742-residue protein sequence, read N- to C-terminus: Envelope glycoprotein H (742 aa).

The N-terminal stretch at 1-29 (MRPGLPSYLIVLAVCLLSHLLSSRYGAEA) is a signal peptide. Residues 30–719 (ISEPLDKAFH…VVDATDSRLL (690 aa)) lie on the Virion surface side of the membrane. Asn-55, Asn-62, Asn-67, and Asn-192 each carry an N-linked (GlcNAc...) asparagine; by host glycan. Residues 217 to 280 (YLIDELRYVK…QTEKHELLVL (64 aa)) are interaction with gL. 2 N-linked (GlcNAc...) asparagine; by host glycosylation sites follow: Asn-641 and Asn-700. A helical transmembrane segment spans residues 720 to 740 (MMSVYALSAIIGIYLLYRMLK). The Intravirion segment spans residues 741-742 (TC).

It belongs to the herpesviridae glycoprotein H family. In terms of assembly, interacts with glycoprotein L (gL); this interaction is necessary for the correct processing and cell surface expression of gH. The heterodimer gH/gL seems to interact with gB trimers during fusion. Forms the envelope pentamer complex (PC) composed of gH, gL, UL128, UL130, and UL131A. The pentamer interacts with host NRP2. Forms the envelope trimer complex composed of gH, gL, and gO. The trimer interacts with host PDGFRA. The trimer also interacts with host EPHA2. Post-translationally, N-glycosylated, O-glycosylated, and sialylated.

The protein localises to the virion membrane. The protein resides in the host cell membrane. Its subcellular location is the host endosome membrane. In terms of biological role, the heterodimer glycoprotein H-glycoprotein L is required for the fusion of viral and plasma membranes leading to virus entry into the host cell. Following initial binding to host receptor, membrane fusion is mediated by the fusion machinery composed of gB and the heterodimer gH/gL. May also be involved in the fusion between the virion envelope and the outer nuclear membrane during virion morphogenesis. In human cytomegalovirus, forms two distincts complexes to mediate viral entry, a trimer and a pentamer at the surface of the virion envelope. The gH-gL-gO trimer is required for infection in fibroblasts by interacting with host PDGFRA, and in glioblastoma cells by interacting with host EPHA2. The gH-gL-UL128-UL130-UL131A pentamer is essential for viral entry in epithelial, endothelial and myeloid cells via interaction with host NRP2. This is Envelope glycoprotein H from Human cytomegalovirus (strain Towne) (HHV-5).